Reading from the N-terminus, the 130-residue chain is Small ribosomal subunit protein uS9 (130 aa).

It belongs to the universal ribosomal protein uS9 family.

In Shewanella halifaxensis (strain HAW-EB4), this protein is Small ribosomal subunit protein uS9.